A 106-amino-acid chain; its full sequence is Minor capsid protein VP2 (106 aa).

The protein belongs to the vesivirus VP2 protein family. Homooligomer. The portal-like structure consists in 12 copies of VP2. Interacts with capsid protein VP1.

The protein resides in the virion. It localises to the host cytoplasm. Minor structural protein that forms a portal-like structure at a unique three-fold axis of symmetry, following binding to the host receptor. The virion attaches to feline junctional adhesion molecule A (F11R). Once attached, the virion is endocytosed. Acidification of the endosome induces conformational change of capsid protein thereby injecting virus genomic RNA into host cytoplasm. The channel formed by VP2 may allow the delivery of the viral genome through the host endosomal membrane. The polypeptide is Minor capsid protein VP2 (Feline calicivirus (strain Cat/United States/Urbana/1960) (FCV)).